The following is a 475-amino-acid chain: Probable dolichyl pyrophosphate Man9GlcNAc2 alpha-1,3-glucosyltransferase (475 aa).

8 helical membrane-spanning segments follow: residues 114 to 133 (VVSA…AYSL), 161 to 181 (GHFQ…AAIL), 235 to 255 (AVVL…LQAV), 296 to 316 (MALV…VLLF), 322 to 342 (VGFL…SFQV), 385 to 405 (LLVP…CFDS), 418 to 438 (IANI…TVPA), and 441 to 461 (KYPD…FFLF).

This sequence belongs to the ALG6/ALG8 glucosyltransferase family.

Its subcellular location is the endoplasmic reticulum membrane. The catalysed reaction is an alpha-D-Man-(1-&gt;2)-alpha-D-Man-(1-&gt;2)-alpha-D-Man-(1-&gt;3)-[alpha-D-Man-(1-&gt;2)-alpha-D-Man-(1-&gt;3)-[alpha-D-Man-(1-&gt;2)-alpha-D-Man-(1-&gt;6)]-alpha-D-Man-(1-&gt;6)]-beta-D-Man-(1-&gt;4)-beta-D-GlcNAc-(1-&gt;4)-alpha-D-GlcNAc-diphospho-di-trans,poly-cis-dolichol + a di-trans,poly-cis-dolichyl beta-D-glucosyl phosphate = an alpha-D-Glc-(1-&gt;3)-alpha-D-Man-(1-&gt;2)-alpha-D-Man-(1-&gt;2)-alpha-D-Man-(1-&gt;3)-[alpha-D-Man-(1-&gt;2)-alpha-D-Man-(1-&gt;3)-[alpha-D-Man-(1-&gt;2)-alpha-D-Man-(1-&gt;6)]-alpha-D-Man-(1-&gt;6)]-beta-D-Man-(1-&gt;4)-beta-D-GlcNAc-(1-&gt;4)-alpha-D-GlcNAc-diphospho-di-trans,poly-cis-dolichol + a di-trans,poly-cis-dolichyl phosphate + H(+). It participates in protein modification; protein glycosylation. Adds the first glucose residue to the lipid-linked oligosaccharide precursor for N-linked glycosylation. Transfers glucose from dolichyl phosphate glucose (Dol-P-Glc) onto the lipid-linked oligosaccharide Man(9)GlcNAc(2)-PP-Dol. Involved in cuticle differentiation. This Drosophila melanogaster (Fruit fly) protein is Probable dolichyl pyrophosphate Man9GlcNAc2 alpha-1,3-glucosyltransferase (gny).